Reading from the N-terminus, the 142-residue chain is Cellulose/chitin binding protein BQ2027_MB2009 (142 aa).

An N-terminal signal peptide occupies residues 1-37 (MAGLNIYVRRWRTALHATVSALIVAILGLAITPVASA). One can recognise a CBM2 domain in the interval 38–142 (ATARATLSVT…CLLNGQYPCT (105 aa)).

The protein localises to the secreted. It is found in the cell wall. The protein resides in the cell membrane. Its function is as follows. Carbohydrate binding protein that binds chitin and cellulose. Lacks enzymatic activity and does not hydrolyze chitin and cellulose. May interact with mycobacterial biofilms, which are rich in cellulose, and play a role in biofilm formation. Could also act as an adhesin, improving the initial attachment to host cells and aiding M.bovis during the initial stages of infection. May act as a virulence factor that modulates host immune responses and contributes to host immune evasion. In Mycobacterium bovis (strain ATCC BAA-935 / AF2122/97), this protein is Cellulose/chitin binding protein BQ2027_MB2009.